We begin with the raw amino-acid sequence, 207 residues long: ADP-ribosylation factor (207 aa).

Gly-2 is lipidated: N-myristoyl glycine. Residues 32-39 (GLDGAGKT), 75-79 (DIGGQ), and 133-136 (NKID) contribute to the GTP site.

It belongs to the small GTPase superfamily. Arf family.

It localises to the golgi apparatus. Its function is as follows. GTP-binding protein involved in protein trafficking; may modulate vesicle budding and uncoating within the Golgi apparatus. This Encephalitozoon cuniculi (strain GB-M1) (Microsporidian parasite) protein is ADP-ribosylation factor (ARF-1).